We begin with the raw amino-acid sequence, 872 residues long: DNA polymerase 1 (872 aa).

This sequence belongs to the DNA polymerase type-B family.

The catalysed reaction is DNA(n) + a 2'-deoxyribonucleoside 5'-triphosphate = DNA(n+1) + diphosphate. The sequence is that of DNA polymerase 1 (pol-alpha) from Sulfurisphaera ohwakuensis.